The chain runs to 524 residues: Thioredoxin reductase 2, mitochondrial (524 aa).

Residues 1–36 (MAAMAVALRGLGGRFRWRTQAVAGGVRGAARGAAAG) constitute a mitochondrion transit peptide. Residue 41–70 (DLLVVGGGSGGLACAKEAAQLGRKVAVVDY) participates in FAD binding. A disulfide bridge links Cys-86 with Cys-91. Lys-175 and Lys-329 each carry N6-succinyllysine. Residue His-497 is the Proton acceptor of the active site. Positions 522 to 523 (CU) form a cross-link, cysteinyl-selenocysteine (Cys-Sec). A non-standard amino acid (selenocysteine) is located at residue Sec-523.

This sequence belongs to the class-I pyridine nucleotide-disulfide oxidoreductase family. As to quaternary structure, homodimer. The cofactor is FAD. As to expression, highly expressed in the prostate, ovary, liver, testis, uterus, colon and small intestine. Intermediate levels in brain, skeletal muscle, heart and spleen. Low levels in placenta, pancreas, thymus and peripheral blood leukocytes. According to PubMed:10608886, high levels in kidney, whereas according to PubMed:9923614, levels are low. High expression is observed in the adrenal cortex.

The protein localises to the mitochondrion. The catalysed reaction is [thioredoxin]-dithiol + NADP(+) = [thioredoxin]-disulfide + NADPH + H(+). Involved in the control of reactive oxygen species levels and the regulation of mitochondrial redox homeostasis. Maintains thioredoxin in a reduced state. May play a role in redox-regulated cell signaling. The polypeptide is Thioredoxin reductase 2, mitochondrial (Homo sapiens (Human)).